We begin with the raw amino-acid sequence, 471 residues long: MNTKYSYGKVYQVVGPVVDVVFEKQDDLPKIYDCLIIDEPNMKLHLEVAQLIGDDIARCIAMGPTEGLARNVKVTSTNQPISVPVGTEVLGRMFNVIGEPIDEKKPIDASVKRMSIHRPAPSFADQSNELEIFETGIKVIDLLIPYAKGGKIGLFGGAGVGKTVLVQELIHNIATGHGGLSVFAGVGERTREGNDLYYEMIEGGVIDKTALVFGQMNEPPGARMRVALTGLTMAEYFRDVNNQDVLLFIDNIFRFTQAGSEVSALLGRMPSAVGYQPTLAEEMGSLQERITSTKSGSITSVQAIYVPADDLTDPAPSTTFTHLDAKTVLDRNIASLGIFPAVNPLDSTSRLLDPSVVGIQHYQTARKVQMILQKFLELQDIIAILGIDELSEEDKLTVSRARKIRNFLSQPFFVAEKFSGNKGKYVPISETIKGFSEIVEGKHDDLPEQAFFYVGSIDEAIERAKTLTRNG.

Gly156–Thr163 serves as a coordination point for ATP.

It belongs to the ATPase alpha/beta chains family. In terms of assembly, F-type ATPases have 2 components, CF(1) - the catalytic core - and CF(0) - the membrane proton channel. CF(1) has five subunits: alpha(3), beta(3), gamma(1), delta(1), epsilon(1). CF(0) has three main subunits: a(1), b(2) and c(9-12). The alpha and beta chains form an alternating ring which encloses part of the gamma chain. CF(1) is attached to CF(0) by a central stalk formed by the gamma and epsilon chains, while a peripheral stalk is formed by the delta and b chains.

It localises to the cell membrane. The enzyme catalyses ATP + H2O + 4 H(+)(in) = ADP + phosphate + 5 H(+)(out). Produces ATP from ADP in the presence of a proton gradient across the membrane. The catalytic sites are hosted primarily by the beta subunits. The polypeptide is ATP synthase subunit beta (Mycoplasmoides gallisepticum (strain R(low / passage 15 / clone 2)) (Mycoplasma gallisepticum)).